Here is a 237-residue protein sequence, read N- to C-terminus: Large ribosomal subunit protein uL2 (237 aa).

The segment covering 1 to 11 has biased composition (polar residues); the sequence is MGKRIISQNRG. Disordered regions lie at residues 1–20 and 201–237; these read MGKR…YRAP and FGGG…GVRR.

It belongs to the universal ribosomal protein uL2 family. As to quaternary structure, part of the 50S ribosomal subunit. Forms a bridge to the 30S subunit in the 70S ribosome.

Its function is as follows. One of the primary rRNA binding proteins. Required for association of the 30S and 50S subunits to form the 70S ribosome, for tRNA binding and peptide bond formation. It has been suggested to have peptidyltransferase activity; this is somewhat controversial. Makes several contacts with the 16S rRNA in the 70S ribosome. This chain is Large ribosomal subunit protein uL2, found in Archaeoglobus fulgidus (strain ATCC 49558 / DSM 4304 / JCM 9628 / NBRC 100126 / VC-16).